The following is a 596-amino-acid chain: Pumilio homolog 12 (596 aa).

The region spanning 254–596 (LNEDLTMSLN…KVLSALSSKK (343 aa)) is the PUM-HD domain. 8 Pumilio repeats span residues 277–312 (EARG…MIFN), 313–348 (EIID…QIVH), 349–388 (SITR…IIIS), 389–424 (ALKH…FLFE), 425–460 (AAIT…HLVS), 461–496 (EIAS…EILE), 497–532 (QLEG…RIIR), and 533–570 (ELIN…LLVD).

The protein localises to the cytoplasm. It localises to the nucleus. Its function is as follows. Sequence-specific RNA-binding protein that regulates translation and mRNA stability by binding the 3'-UTR of target mRNAs. The sequence is that of Pumilio homolog 12 (APUM12) from Arabidopsis thaliana (Mouse-ear cress).